Here is a 1342-residue protein sequence, read N- to C-terminus: DNA-directed RNA polymerase subunit beta (1342 aa).

This sequence belongs to the RNA polymerase beta chain family. In terms of assembly, the RNAP catalytic core consists of 2 alpha, 1 beta, 1 beta' and 1 omega subunit. When a sigma factor is associated with the core the holoenzyme is formed, which can initiate transcription.

It catalyses the reaction RNA(n) + a ribonucleoside 5'-triphosphate = RNA(n+1) + diphosphate. In terms of biological role, DNA-dependent RNA polymerase catalyzes the transcription of DNA into RNA using the four ribonucleoside triphosphates as substrates. In Salmonella gallinarum (strain 287/91 / NCTC 13346), this protein is DNA-directed RNA polymerase subunit beta.